The chain runs to 304 residues: Ribosomal RNA large subunit methyltransferase F (304 aa).

It belongs to the methyltransferase superfamily. METTL16/RlmF family.

It is found in the cytoplasm. It catalyses the reaction adenosine(1618) in 23S rRNA + S-adenosyl-L-methionine = N(6)-methyladenosine(1618) in 23S rRNA + S-adenosyl-L-homocysteine + H(+). Functionally, specifically methylates the adenine in position 1618 of 23S rRNA. The sequence is that of Ribosomal RNA large subunit methyltransferase F from Klebsiella pneumoniae subsp. pneumoniae (strain ATCC 700721 / MGH 78578).